The chain runs to 110 residues: G antigen 2E (110 aa).

The segment at Met1–Glu110 is disordered. Acidic residues-rich tracts occupy residues Phe32–Glu45 and Glu87–Glu96.

It belongs to the GAGE family.

The polypeptide is G antigen 2E (GAGE2E) (Homo sapiens (Human)).